Here is a 198-residue protein sequence, read N- to C-terminus: MICOS complex subunit MIC26 (198 aa).

An N-terminal signal peptide occupies residues 1-25 (MFKVIQRSVGPASLSLLTFKVYAAP). A helical transmembrane segment spans residues 108–128 (PGFFPRLGVIGFAGLIGLLLA). O-linked (Xyl...) (chondroitin sulfate) serine glycosylation is present at serine 162.

The protein belongs to the apolipoprotein O/MICOS complex subunit Mic27 family. In terms of assembly, component of the mitochondrial contact site and cristae organizing system (MICOS) complex, composed of at least MICOS10/MIC10, CHCHD3/MIC19, CHCHD6/MIC25, APOOL/MIC27, IMMT/MIC60, APOO/MIC23/MIC26 and MICOS13/MIC13. This complex was also known under the names MINOS or MitOS complex. he MICOS complex associates with mitochondrial outer membrane proteins SAMM50, MTX1 and MTX2 (together described as components of the mitochondrial outer membrane sorting assembly machinery (SAM) complex) and DNAJC11, mitochondrial inner membrane protein TMEM11 and with HSPA9. The MICOS and SAM complexes together with DNAJC11 are part of a large protein complex spanning both membranes termed the mitochondrial intermembrane space bridging (MIB) complex. Interacts with IMMT/MIC60. Interacts with MICOS10/MIC10 and APOOL/MIC27. In terms of processing, O-glycosylation; glycosaminoglycan of chondroitin-sulfate type. As to expression, expressed in all tissues examined. Up-regulated in diabetic heart.

Its subcellular location is the mitochondrion inner membrane. The protein resides in the secreted. It is found in the mitochondrion. The protein localises to the golgi apparatus membrane. It localises to the endoplasmic reticulum membrane. Component of the MICOS complex, a large protein complex of the mitochondrial inner membrane that plays crucial roles in the maintenance of crista junctions, inner membrane architecture, and formation of contact sites to the outer membrane. Plays a crucial role in crista junction formation and mitochondrial function. Can promote cardiac lipotoxicity by enhancing mitochondrial respiration and fatty acid metabolism in cardiac myoblasts. Promotes cholesterol efflux from macrophage cells. Detected in HDL, LDL and VLDL. Secreted by a microsomal triglyceride transfer protein (MTTP)-dependent mechanism, probably as a VLDL-associated protein that is subsequently transferred to HDL. This Homo sapiens (Human) protein is MICOS complex subunit MIC26 (APOO).